Consider the following 71-residue polypeptide: UPF0352 protein Asuc_0778 (71 aa).

The protein belongs to the UPF0352 family.

This is UPF0352 protein Asuc_0778 from Actinobacillus succinogenes (strain ATCC 55618 / DSM 22257 / CCUG 43843 / 130Z).